The primary structure comprises 684 residues: PAN2-PAN3 deadenylation complex subunit PAN3 (684 aa).

Disordered stretches follow at residues 1 to 38, 68 to 97, and 112 to 146; these read MLPP…RETA, DPST…PARE, and VPKG…STGL. The segment covering 21 to 38 has biased composition (basic and acidic residues); the sequence is EKAKEKEKKHSPEKRETA. The C3H1-type zinc finger occupies 36–65; sequence ETAQRICRNVMIYGYCKYQDQGCIYYHPPA. Pro residues predominate over residues 127–139; sequence VPTPSAPTPPVWP. The tract at residues 263–544 is pseudokinase domain; that stretch reads GANGASAPGL…SIDEVVKMMG (282 aa). Residues R326 and 375–382 each bind ATP; that span reads DYHPLSTT. The interval 387–412 is disordered; it reads YLSPNPPEPSPASALANQPPKRRSSP. ATP is bound at residue 444-445; that stretch reads SK. A coiled-coil region spans residues 545 to 583; that stretch reads PRILNELDAVQSYADVLENELGAEVENGRIVRLLTKLGF. The tract at residues 584–684 is knob domain; the sequence is INERAEFELD…NAGNNHRVHR (101 aa).

Belongs to the protein kinase superfamily. PAN3 family. In terms of assembly, homodimer. Forms a heterotrimer with a catalytic subunit PAN2 to form the poly(A)-nuclease (PAN) deadenylation complex. Interacts (via PAM-2 motif) with poly(A)-binding protein PAB1 (via PABC domain), conferring substrate specificity of the enzyme complex.

It is found in the cytoplasm. Functionally, regulatory subunit of the poly(A)-nuclease (PAN) deadenylation complex, one of two cytoplasmic mRNA deadenylases involved in mRNA turnover. PAN specifically shortens poly(A) tails of RNA and the activity is stimulated by poly(A)-binding protein PAB1. PAN deadenylation is followed by rapid degradation of the shortened mRNA tails by the CCR4-NOT complex. Deadenylated mRNAs are then degraded by two alternative mechanisms, namely exosome-mediated 3'-5' exonucleolytic degradation, or deadenylation-dependent mRNA decaping and subsequent 5'-3' exonucleolytic degradation by XRN1. May also be involved in post-transcriptional maturation of mRNA poly(A) tails. PAN3 acts as a positive regulator for PAN activity, recruiting the catalytic subunit PAN2 to mRNA via its interaction with RNA and with PAB1. This chain is PAN2-PAN3 deadenylation complex subunit PAN3, found in Cryptococcus neoformans var. neoformans serotype D (strain B-3501A) (Filobasidiella neoformans).